The following is a 647-amino-acid chain: Threonine--tRNA ligase (647 aa).

The region spanning 1-61 is the TGS domain; that stretch reads MIKITFPDGA…EEDGSIEIVT (61 aa). A catalytic region spans residues 240-538; the sequence is DHRKLGKELD…LIETYKGAFP (299 aa). Zn(2+) is bound by residues Cys-334, His-385, and His-515.

Belongs to the class-II aminoacyl-tRNA synthetase family. Homodimer. Zn(2+) serves as cofactor.

The protein localises to the cytoplasm. It carries out the reaction tRNA(Thr) + L-threonine + ATP = L-threonyl-tRNA(Thr) + AMP + diphosphate + H(+). Catalyzes the attachment of threonine to tRNA(Thr) in a two-step reaction: L-threonine is first activated by ATP to form Thr-AMP and then transferred to the acceptor end of tRNA(Thr). Also edits incorrectly charged L-seryl-tRNA(Thr). The sequence is that of Threonine--tRNA ligase from Streptococcus pyogenes serotype M6 (strain ATCC BAA-946 / MGAS10394).